Consider the following 107-residue polypeptide: Integration host factor subunit beta (107 aa).

Residues F76–R107 are disordered. Residues P82 to D101 are compositionally biased toward basic and acidic residues.

The protein belongs to the bacterial histone-like protein family. Heterodimer of an alpha and a beta chain.

This protein is one of the two subunits of integration host factor, a specific DNA-binding protein that functions in genetic recombination as well as in transcriptional and translational control. The sequence is that of Integration host factor subunit beta from Burkholderia cenocepacia (strain HI2424).